A 640-amino-acid chain; its full sequence is Protein SPT10 (640 aa).

Residues 1-30 form a disordered region; the sequence is MLNQHTSSVPDDEHLQMAHQNSSSEVRNEA. Residues 121–259 enclose the N-acetyltransferase domain; it reads LDYSMDTEAD…AGILKGFDVP (139 aa). A disordered region spans residues 534 to 565; it reads PHLTNNESQDHANPVNRDERDMNHSVPDLDRN. A compositionally biased stretch (basic and acidic residues) spans 549–565; it reads NRDERDMNHSVPDLDRN.

Its function is as follows. Required for normal transcription at a number of loci in yeast. Affects transcription at Ty1 elements, at PHO5, STE6 and ADH2. This chain is Protein SPT10 (SPT10), found in Saccharomyces cerevisiae (strain ATCC 204508 / S288c) (Baker's yeast).